Consider the following 997-residue polypeptide: Translation initiation factor IF-2 (997 aa).

The segment at 101–406 is disordered; that stretch reads ELAAEQAAAR…SRNQHQDRRH (306 aa). Low complexity-rich tracts occupy residues 116–185 and 195–209; these read AEAV…QAEP and AAPA…EPAK. A compositionally biased stretch (polar residues) spans 231 to 242; sequence TELTSQTPTPVA. Positions 256-280 are enriched in low complexity; sequence AEPAAAPKTTAKPGEIRRAAAPAAP. A compositionally biased stretch (basic and acidic residues) spans 281–292; sequence DRAREEARRAAE. The span at 385–394 shows a compositional bias: gly residues; that stretch reads RAGGKGGRGG. The tr-type G domain occupies 498 to 665; it reads PRAPVVTVMG…NVLLQAEILE (168 aa). Residues 507-514 are G1; that stretch reads GHVDHGKT. A GTP-binding site is contributed by 507-514; sequence GHVDHGKT. Positions 532 to 536 are G2; the sequence is GITQH. A G3 region spans residues 553–556; sequence DTPG. Residues 553 to 557 and 607 to 610 contribute to the GTP site; these read DTPGH and NKID. Positions 607 to 610 are G4; the sequence is NKID. Positions 643–645 are G5; that stretch reads SAK.

This sequence belongs to the TRAFAC class translation factor GTPase superfamily. Classic translation factor GTPase family. IF-2 subfamily.

It localises to the cytoplasm. Functionally, one of the essential components for the initiation of protein synthesis. Protects formylmethionyl-tRNA from spontaneous hydrolysis and promotes its binding to the 30S ribosomal subunits. Also involved in the hydrolysis of GTP during the formation of the 70S ribosomal complex. The sequence is that of Translation initiation factor IF-2 from Bordetella pertussis (strain Tohama I / ATCC BAA-589 / NCTC 13251).